Here is a 238-residue protein sequence, read N- to C-terminus: Probable 2-phosphosulfolactate phosphatase (238 aa).

Belongs to the ComB family. The cofactor is Mg(2+).

The catalysed reaction is (2R)-O-phospho-3-sulfolactate + H2O = (2R)-3-sulfolactate + phosphate. The polypeptide is Probable 2-phosphosulfolactate phosphatase (Clostridium botulinum (strain Eklund 17B / Type B)).